The chain runs to 104 residues: Protein MHF2 homolog (104 aa).

The protein belongs to the CENP-X/MHF2 family.

It is found in the nucleus. Acts in the same pathway as FANCM to restrain class II meiotic crossing over (CO), and acts with FANCM during meiosis to repair interstrand cross-links (ICLs). This is Protein MHF2 homolog from Arabidopsis thaliana (Mouse-ear cress).